A 301-amino-acid polypeptide reads, in one-letter code: Ras-related GTP-binding protein A (301 aa).

GTP-binding positions include 9–16 (GRSESGKT), 57–61 (DCGGQ), and 122–125 (HKMD).

It belongs to the GTR/RAG GTP-binding protein family.

It localises to the cytoplasm. Its subcellular location is the nucleus. The protein localises to the lysosome. Functionally, guanine nucleotide-binding protein that plays a crucial role in the cellular response to amino acid availability through regulation of the TOR signaling cascade. This Dictyostelium discoideum (Social amoeba) protein is Ras-related GTP-binding protein A (ragA).